The chain runs to 134 residues: Transcription factor atoh7 (134 aa).

The segment at Met-1–Met-27 is disordered. The span at Ser-15 to Met-27 shows a compositional bias: basic and acidic residues. A bHLH domain is found at Arg-28–Leu-80.

It is found in the nucleus. The protein resides in the perikaryon. Its subcellular location is the cell projection. The protein localises to the axon. In terms of biological role, transcription factor that binds to DNA at the consensus sequence 5'-CAG[GC]TG-3'. Involved in the differentiation of retinal ganglion cells, photoreceptor population and optic nerve development. Required for retinal circadian rhythm photoentrainment. The sequence is that of Transcription factor atoh7 from Danio rerio (Zebrafish).